A 953-amino-acid polypeptide reads, in one-letter code: Isoleucine--tRNA ligase (953 aa).

The short motif at 57–67 (PYANGDIHIGH) is the 'HIGH' region element. Glutamate 582 provides a ligand contact to L-isoleucyl-5'-AMP. The 'KMSKS' region motif lies at 623 to 627 (KMSKS). ATP is bound at residue lysine 626. 4 residues coordinate Zn(2+): cysteine 916, cysteine 919, cysteine 936, and cysteine 939.

Belongs to the class-I aminoacyl-tRNA synthetase family. IleS type 1 subfamily. In terms of assembly, monomer. Zn(2+) is required as a cofactor.

The protein localises to the cytoplasm. The catalysed reaction is tRNA(Ile) + L-isoleucine + ATP = L-isoleucyl-tRNA(Ile) + AMP + diphosphate. Its function is as follows. Catalyzes the attachment of isoleucine to tRNA(Ile). As IleRS can inadvertently accommodate and process structurally similar amino acids such as valine, to avoid such errors it has two additional distinct tRNA(Ile)-dependent editing activities. One activity is designated as 'pretransfer' editing and involves the hydrolysis of activated Val-AMP. The other activity is designated 'posttransfer' editing and involves deacylation of mischarged Val-tRNA(Ile). This chain is Isoleucine--tRNA ligase, found in Bordetella pertussis (strain Tohama I / ATCC BAA-589 / NCTC 13251).